The following is a 429-amino-acid chain: Adenylosuccinate synthetase (429 aa).

GTP is bound by residues 12–18 (GDEGKGK) and 40–42 (GHT). The active-site Proton acceptor is Asp13. Positions 13 and 40 each coordinate Mg(2+). IMP contacts are provided by residues 13–16 (DEGK), 38–41 (NAGH), Thr129, Arg143, Gln224, Thr239, and Arg303. Residue His41 is the Proton donor of the active site. Position 299-305 (299-305 (VTTGRAR)) interacts with substrate. Residues Arg305, 331–333 (KLD), and 413–415 (GVG) each bind GTP.

It belongs to the adenylosuccinate synthetase family. In terms of assembly, homodimer. Mg(2+) is required as a cofactor.

Its subcellular location is the cytoplasm. It carries out the reaction IMP + L-aspartate + GTP = N(6)-(1,2-dicarboxyethyl)-AMP + GDP + phosphate + 2 H(+). Its pathway is purine metabolism; AMP biosynthesis via de novo pathway; AMP from IMP: step 1/2. Plays an important role in the de novo pathway of purine nucleotide biosynthesis. Catalyzes the first committed step in the biosynthesis of AMP from IMP. The polypeptide is Adenylosuccinate synthetase (Rhodococcus jostii (strain RHA1)).